Here is a 997-residue protein sequence, read N- to C-terminus: Protein Smaug (997 aa).

The segment covering 1-37 (MKYATGTDNAMTSGISGQTNNSNSASTEMQPTTSTPT) has biased composition (polar residues). Disordered stretches follow at residues 1-69 (MKYA…QSQP) and 329-370 (LCPA…GSSS). 2 stretches are compositionally biased toward low complexity: residues 44–69 (TPTATTTATYANGNPNPNANPSQSQP) and 329–338 (LCPASGSRSS). Phosphoserine is present on residues serine 564 and serine 575. The tract at residues 583–763 (EFKPNYIKFH…KDLKFKLSKM (181 aa)) is interaction with cup. Residues 600–654 (GIGLWLKSLRLHKYIELFKNMTYEEMLLITEDFLQSVGVTKGASHKLALCIEKLK) form the SAM domain. 2 disordered regions span residues 773-892 (HVKP…MQQM) and 944-972 (GSSDNLGLERNQQPQQQQRKLSGGVTSAE). Polar residues-rich tracts occupy residues 802 to 822 (NGSNDRINNRKNSNDMLNFSL) and 854 to 864 (HQPQYKSSSYP). Residue serine 970 is modified to Phosphoserine.

The protein belongs to the SMAUG family. In terms of assembly, interacts with oskar (osk). Binds to the 3'-UTR of nos. Interacts with cup, which in turn recruits eIF4-E, leading to an indirect interaction between smg and eIF4-E that prevents mRNA translation.

It localises to the cytoplasm. Its function is as follows. Translation regulator that binds to the 3'-UTR of specific mRNAs such as nanos (nos) and prevent their translation. Prevents translation of unlocalized nos in the bulk cytoplasm via the recruitment of cup. This is Protein Smaug from Drosophila erecta (Fruit fly).